The following is a 582-amino-acid chain: External alternative NAD(P)H-ubiquinone oxidoreductase B2, mitochondrial (582 aa).

Residues 1-38 (MRNFSVFERFSKAFKDHPSLTRILVVSTISGGGLIAYS) constitute a mitochondrion transit peptide. Position 60–90 (60–90 (KVVLLGTGWAGTSFLKNLNNSQYEVQIISPR)) interacts with FAD. 223–259 (LHFVVVGGGPTGVEFAAELHDFVTEDLVSLYPRAKGS) contacts NAD(+). In terms of domain architecture, EF-hand spans 379–414 (KVMEDVSAIFSKADKDKSGTLTLKEFQEAMDDICVR). 5 residues coordinate Ca(2+): Asp-392, Asp-394, Ser-396, Thr-398, and Glu-403. The Microbody targeting signal signature appears at 573 to 582 (FIFGRDSSSI).

Belongs to the NADH dehydrogenase family. It depends on FAD as a cofactor. In terms of tissue distribution, mostly expressed in seedlings and roots and, to a lower extent, in cotyledons, leaves, stems, buds and flowers.

It is found in the mitochondrion inner membrane. The protein localises to the peroxisome. It catalyses the reaction a quinone + NADH + H(+) = a quinol + NAD(+). The catalysed reaction is a ubiquinone + NADH + H(+) = a ubiquinol + NAD(+). Its activity is regulated as follows. NADPH oxidase activity is stimulated by calcium ions. Alternative NADH-ubiquinone oxidoreductase which catalyzes the oxidation of mitochondrial NADH does not translocate protons across the inner mitochondrial membrane. Calcium-dependent NAD(P)H dehydrogenase; more efficient on NADH. Binds calcium ions. The protein is External alternative NAD(P)H-ubiquinone oxidoreductase B2, mitochondrial (NDB2) of Arabidopsis thaliana (Mouse-ear cress).